The primary structure comprises 692 residues: Epithelial sodium channel subunit alpha (692 aa).

The disordered stretch occupies residues 1–67 (MSSIKGNKLE…PAAPQQPTAE (67 aa)). At 1–108 (MSSIKGNKLE…CSQHNRMKTA (108 aa)) the chain is on the cytoplasmic side. Low complexity predominate over residues 56–65 (PEPAAPQQPT). The chain crosses the membrane as a helical span at residues 109–129 (FWAVLWLCTFGMMYWQFGLLF). Residues 130 to 585 (GEYFSYPVSL…SQWSLWFGSS (456 aa)) are Extracellular-facing. 10 disulfide bridges follow: Cys-156–Cys-328, Cys-252–Cys-259, Cys-305–Cys-312, Cys-417–Cys-502, Cys-439–Cys-479, Cys-439–Cys-498, Cys-443–Cys-494, Cys-452–Cys-479, Cys-452–Cys-502, and Cys-454–Cys-468. A gating release of inhibition by proteolysis (GRIP); protease-sensitive region that is responsible for the proteolytic activation of the channel region spans residues 198–266 (RSRRDLRGTL…SDCFYQTYSS (69 aa)). The helical transmembrane segment at 586 to 606 (VLSVVEMAELIFDLLVITFLM) threads the bilayer. Residues 607 to 692 (LLRRFRSRYW…GSSACPLGGP (86 aa)) are Cytoplasmic-facing. The interval 627–692 (EVASTLASSP…GSSACPLGGP (66 aa)) is disordered. Residues 628 to 637 (VASTLASSPP) are compositionally biased toward polar residues. Positions 653-666 (GPAPSPALTAPPPA) are enriched in pro residues. The PY motif; recruits WW domain-containing proteins and is thereby required for ubiquitination and inhibition of the channel by NEDD4 and NEDD4L motif lies at 663–667 (PPPAY). The segment covering 682–692 (AGSSACPLGGP) has biased composition (low complexity).

The protein belongs to the amiloride-sensitive sodium channel (TC 1.A.6) family. SCNN1A subfamily. As to quaternary structure, heterotrimer; containing an alpha/SCNN1A, a beta/SCNN1B and a gamma/SCNN1G subunit. Interacts with WWP1 (via WW domains). Interacts with WWP2 (via WW domains); inhibits the channel. Interacts with BPIFA1; the interaction is indirect via SCNN1B and inhibits the proteolytic processing of SCNN1A and SCNN1G and the activation of ENaC. Interacts with the full-length immature form of PCSK9 (pro-PCSK9). Post-translationally, ubiquitinated. Can be ubiquitinated at multiple sites and undergo monoubiquitination and polyubiquitination. Ubiquitination by NEDD4 or NEDD4L inhibits the ENaC channel through endocytosis, intracellular retention and degradation of its individual subunits. N-glycosylated. In terms of processing, ENaC is activated through the proteolytic maturation of its subunits. Furin cleaves the SCNN1A subunit, which results in a stepwise increase in the open probability of the channel due to the release of an inhibitory tract. BPIFA1, which is recruited by the SCNN1B subunit, prevents the proteolytic activation of ENaC.

It is found in the apical cell membrane. It localises to the cell projection. The protein localises to the cilium. The protein resides in the cytoplasmic granule. Its subcellular location is the cytoplasm. It is found in the cytoplasmic vesicle. It localises to the secretory vesicle. The protein localises to the acrosome. The protein resides in the flagellum. The enzyme catalyses Na(+)(in) = Na(+)(out). Originally identified and characterized by its inhibition by the diuretic drug amiloride. In terms of biological role, this is one of the three pore-forming subunits of the heterotrimeric epithelial sodium channel (ENaC), a critical regulator of sodium balance and fluid homeostasis. ENaC operates in epithelial tissues, where it mediates the electrodiffusion of sodium ions from extracellular fluid through the apical membrane of cells, with water following osmotically. It plays a key role in maintaining sodium homeostasis through electrogenic sodium reabsorption in the kidneys. Additionally, ENaC is essential for airway surface liquid homeostasis, which is crucial for proper mucus clearance. The protein is Epithelial sodium channel subunit alpha of Pan troglodytes (Chimpanzee).